The primary structure comprises 117 residues: Large ribosomal subunit protein bL19 (117 aa).

This sequence belongs to the bacterial ribosomal protein bL19 family.

In terms of biological role, this protein is located at the 30S-50S ribosomal subunit interface and may play a role in the structure and function of the aminoacyl-tRNA binding site. In Thioalkalivibrio sulfidiphilus (strain HL-EbGR7), this protein is Large ribosomal subunit protein bL19.